The sequence spans 578 residues: MASLGFLFFFLLPLILLELSSSRSVMAAKTRHFKWDVEYIHWSPDGEESVVMGINGQFPGPTIRAKAGDTVAVHLTNKLHTEGVVIHWHGIRQIGTPWADGTAAISQCAINPGETFLYRFKVDKAGTYFYHGHYGMQRSAGLYGSLIVEVGEGEKEPFHYDGEFNLLLSDWWHKGSHEQEVDLSSNPLRWIGEPQTLLLNGRGQYNCSLAARFSKPPLPQCKLRGGEQYAPQILRVRPNKIYRLRVASTTALGSLSLAIGGHKMVVVEADGNYVQPFSVQDMDIYSGESYSVLFKTDQDPTKNYWISINVRGREPKTPQGLTLLNYLPNSASKFPTLPPPIAPLWNDYNHSKSFSNKIFALMGSPKPPPQNHRRIILLNTQNKIDGYTKWAINNVSLVLPTQLYLGSIRYGINAFDTKPPPDNFPKDYDVLKQAPNSNSTYGNGVYMLKFNTTIDIILQNANALAKDVSEIHPWHLHGHDFWVLGYGEGKFSEKDVKKFNLKNPPLRNTAVIFPFGWTALRFVTDNPGVWAFHCHIEPHLHMGMGVIFAEGVHLVKKIPKEALACGLTGKMLMSNKHN.

Positions 1–28 are cleaved as a signal peptide; the sequence is MASLGFLFFFLLPLILLELSSSRSVMAA. Plastocyanin-like domains are found at residues 30 to 149 and 161 to 328; these read TRHF…LIVE and DGEF…NYLP. Cu cation contacts are provided by H87, H89, H131, and H133. Cystine bridges form between C108-C565 and C207-C221. An N-linked (GlcNAc...) asparagine glycan is attached at N206. Residues N349, N394, N438, and N451 are each glycosylated (N-linked (GlcNAc...) asparagine). The region spanning 372-550 is the Plastocyanin-like 3 domain; that stretch reads HRRIILLNTQ…HMGMGVIFAE (179 aa). Cu cation is bound by residues H472, H475, H477, H533, C534, H535, H539, and M544.

It belongs to the multicopper oxidase family. In terms of assembly, dimer. It depends on Cu cation as a cofactor. As to expression, highly expressed in young and growing tissues.

Its subcellular location is the secreted. It catalyses the reaction 4 L-ascorbate + O2 = 4 monodehydro-L-ascorbate radical + 2 H2O. Its function is as follows. May be involved in a redox system involving ascorbic acid. In Nicotiana tabacum (Common tobacco), this protein is L-ascorbate oxidase (AAO).